The chain runs to 239 residues: tRNA (guanine-N(1)-)-methyltransferase (239 aa).

S-adenosyl-L-methionine-binding positions include Gly108 and Leu127–Leu132.

The protein belongs to the RNA methyltransferase TrmD family. Homodimer.

It localises to the cytoplasm. The catalysed reaction is guanosine(37) in tRNA + S-adenosyl-L-methionine = N(1)-methylguanosine(37) in tRNA + S-adenosyl-L-homocysteine + H(+). Functionally, specifically methylates guanosine-37 in various tRNAs. The polypeptide is tRNA (guanine-N(1)-)-methyltransferase (Streptococcus pneumoniae serotype 2 (strain D39 / NCTC 7466)).